A 359-amino-acid polypeptide reads, in one-letter code: Phospho-N-acetylmuramoyl-pentapeptide-transferase (359 aa).

10 consecutive transmembrane segments (helical) span residues 3-23 (QIMI…PALI), 55-75 (VAIL…GLAF), 80-100 (ITAS…VGFL), 117-137 (TAKT…VLQF), 156-176 (IATV…VVSA), 187-207 (LDGL…LITF), 231-251 (LALI…WNAA), 255-275 (IFMG…LSVT), 280-300 (ILAV…VLQI), and 334-354 (FWLL…GEWL).

This sequence belongs to the glycosyltransferase 4 family. MraY subfamily. It depends on Mg(2+) as a cofactor.

It is found in the cell membrane. The catalysed reaction is UDP-N-acetyl-alpha-D-muramoyl-L-alanyl-gamma-D-glutamyl-meso-2,6-diaminopimeloyl-D-alanyl-D-alanine + di-trans,octa-cis-undecaprenyl phosphate = di-trans,octa-cis-undecaprenyl diphospho-N-acetyl-alpha-D-muramoyl-L-alanyl-D-glutamyl-meso-2,6-diaminopimeloyl-D-alanyl-D-alanine + UMP. It participates in cell wall biogenesis; peptidoglycan biosynthesis. Functionally, catalyzes the initial step of the lipid cycle reactions in the biosynthesis of the cell wall peptidoglycan: transfers peptidoglycan precursor phospho-MurNAc-pentapeptide from UDP-MurNAc-pentapeptide onto the lipid carrier undecaprenyl phosphate, yielding undecaprenyl-pyrophosphoryl-MurNAc-pentapeptide, known as lipid I. The polypeptide is Phospho-N-acetylmuramoyl-pentapeptide-transferase (Mycobacterium ulcerans (strain Agy99)).